Reading from the N-terminus, the 1026-residue chain is Probable DNA-directed RNA polymerase II subunit RPB1 homolog (1026 aa).

Cys62, Cys65, Cys72, His75, Cys102, Cys105, and Cys142 together coordinate Zn(2+). Residues Asp588, Asp590, and Asp592 each coordinate Mg(2+).

It belongs to the RNA polymerase beta' chain family.

It carries out the reaction RNA(n) + a ribonucleoside 5'-triphosphate = RNA(n+1) + diphosphate. In terms of biological role, component of the DNA-dependent RNA polymerase that catalyzes the transcription of DNA into RNA using the four ribonucleoside triphosphates as substrates. Largest and catalytic component of RNA polymerase II which synthesizes mRNA precursors and many functional non-coding RNAs. Forms the polymerase active center together with the second largest subunit. This chain is Probable DNA-directed RNA polymerase II subunit RPB1 homolog, found in Acheta domesticus (House cricket).